We begin with the raw amino-acid sequence, 214 residues long: UPF0056 membrane protein aq_540 (214 aa).

6 helical membrane passes run 17–37 (FLSLLAIMNPFSSVPVVISLM), 47–67 (VIALKASVYAFFILTFFLISG), 73–93 (FMGITLPAFKVGGGILLFLIA), 122–142 (LIPLAMPLLAGPGSITTVLVL), 153–173 (VALFCAIFLSSFTAFVVYSLS), and 185–205 (INLITRISGILLLAISVQFVV).

Belongs to the UPF0056 (MarC) family.

It is found in the cell membrane. The protein is UPF0056 membrane protein aq_540 of Aquifex aeolicus (strain VF5).